We begin with the raw amino-acid sequence, 83 residues long: Cytochrome b559 subunit alpha (83 aa).

Residues 21-35 traverse the membrane as a helical segment; that stretch reads VIHSITIPSLFIAGW. H23 serves as a coordination point for heme.

This sequence belongs to the PsbE/PsbF family. As to quaternary structure, heterodimer of an alpha subunit and a beta subunit. PSII is composed of 1 copy each of membrane proteins PsbA, PsbB, PsbC, PsbD, PsbE, PsbF, PsbH, PsbI, PsbJ, PsbK, PsbL, PsbM, PsbT, PsbX, PsbY, PsbZ, Psb30/Ycf12, at least 3 peripheral proteins of the oxygen-evolving complex and a large number of cofactors. It forms dimeric complexes. Requires heme b as cofactor.

It is found in the plastid. The protein resides in the chloroplast thylakoid membrane. Its function is as follows. This b-type cytochrome is tightly associated with the reaction center of photosystem II (PSII). PSII is a light-driven water:plastoquinone oxidoreductase that uses light energy to abstract electrons from H(2)O, generating O(2) and a proton gradient subsequently used for ATP formation. It consists of a core antenna complex that captures photons, and an electron transfer chain that converts photonic excitation into a charge separation. The protein is Cytochrome b559 subunit alpha of Zygnema circumcarinatum (Green alga).